A 941-amino-acid polypeptide reads, in one-letter code: Translation initiation factor IF-2 (941 aa).

The span at 170–209 (DAQKAEVDAQKAEAEKPVEVKADESAIEEKKRVAAEESKK) shows a compositional bias: basic and acidic residues. 2 disordered regions span residues 170–228 (DAQK…KAAA) and 252–351 (RAIK…SNFQ). A compositionally biased stretch (low complexity) spans 256–269 (APEPVAPVAKPAAE). The segment covering 271-297 (TLHKPADKKPGEKKDEKKPAVTADKKS) has biased composition (basic and acidic residues). The span at 299-308 (KSANVSSTWQ) shows a compositional bias: polar residues. One can recognise a tr-type G domain in the interval 441–610 (PRAPVVTVMG…LLQAEVLELK (170 aa)). The G1 stretch occupies residues 450 to 457 (GHVDHGKT). Residue 450–457 (GHVDHGKT) coordinates GTP. Residues 475-479 (GITQH) form a G2 region. Positions 496–499 (DTPG) are G3. Residues 496–500 (DTPGH) and 550–553 (NKID) each bind GTP. The tract at residues 550 to 553 (NKID) is G4. Residues 586–588 (SAK) are G5.

It belongs to the TRAFAC class translation factor GTPase superfamily. Classic translation factor GTPase family. IF-2 subfamily.

The protein resides in the cytoplasm. Functionally, one of the essential components for the initiation of protein synthesis. Protects formylmethionyl-tRNA from spontaneous hydrolysis and promotes its binding to the 30S ribosomal subunits. Also involved in the hydrolysis of GTP during the formation of the 70S ribosomal complex. This chain is Translation initiation factor IF-2, found in Herminiimonas arsenicoxydans.